Reading from the N-terminus, the 473-residue chain is Glutamate-1-semialdehyde 2,1-aminomutase, chloroplastic (473 aa).

The transit peptide at Met-1–Ser-37 directs the protein to the chloroplast. The residue at position 313 (Lys-313) is an N6-(pyridoxal phosphate)lysine.

This sequence belongs to the class-III pyridoxal-phosphate-dependent aminotransferase family. HemL subfamily. As to quaternary structure, homodimer. The cofactor is pyridoxal 5'-phosphate.

The protein resides in the plastid. The protein localises to the chloroplast. The catalysed reaction is (S)-4-amino-5-oxopentanoate = 5-aminolevulinate. Its pathway is porphyrin-containing compound metabolism; protoporphyrin-IX biosynthesis; 5-aminolevulinate from L-glutamyl-tRNA(Glu): step 2/2. It functions in the pathway porphyrin-containing compound metabolism; chlorophyll biosynthesis. This chain is Glutamate-1-semialdehyde 2,1-aminomutase, chloroplastic (GSA), found in Brassica napus (Rape).